The chain runs to 105 residues: Small ribosomal subunit protein uS10 (105 aa).

The protein belongs to the universal ribosomal protein uS10 family. In terms of assembly, part of the 30S ribosomal subunit.

In terms of biological role, involved in the binding of tRNA to the ribosomes. The polypeptide is Small ribosomal subunit protein uS10 (Rickettsia conorii (strain ATCC VR-613 / Malish 7)).